The sequence spans 337 residues: Adenosine deaminase (337 aa).

Positions 15 and 17 each coordinate Zn(2+). Substrate-binding residues include His-17, Asp-19, and Gly-172. His-199 serves as a coordination point for Zn(2+). Glu-202 serves as the catalytic Proton donor. Position 279 (Asp-279) interacts with Zn(2+).

It belongs to the metallo-dependent hydrolases superfamily. Adenosine and AMP deaminases family. Adenosine deaminase subfamily. Zn(2+) serves as cofactor.

The enzyme catalyses adenosine + H2O + H(+) = inosine + NH4(+). It catalyses the reaction 2'-deoxyadenosine + H2O + H(+) = 2'-deoxyinosine + NH4(+). Its function is as follows. Catalyzes the hydrolytic deamination of adenosine and 2-deoxyadenosine. The chain is Adenosine deaminase from Enterococcus faecalis (strain ATCC 700802 / V583).